Reading from the N-terminus, the 251-residue chain is Hydroxyacylglutathione hydrolase (251 aa).

His53, His55, Asp57, His58, His110, Asp127, and His165 together coordinate Zn(2+).

This sequence belongs to the metallo-beta-lactamase superfamily. Glyoxalase II family. Monomer. The cofactor is Zn(2+).

The catalysed reaction is an S-(2-hydroxyacyl)glutathione + H2O = a 2-hydroxy carboxylate + glutathione + H(+). It functions in the pathway secondary metabolite metabolism; methylglyoxal degradation; (R)-lactate from methylglyoxal: step 2/2. Thiolesterase that catalyzes the hydrolysis of S-D-lactoyl-glutathione to form glutathione and D-lactic acid. In Escherichia coli (strain SE11), this protein is Hydroxyacylglutathione hydrolase.